Reading from the N-terminus, the 1249-residue chain is Calmodulin-regulated spectrin-associated protein 3 (1249 aa).

Disordered stretches follow at residues 183–205 (KTEQEAAQRASPAAPADGAAPAQ), 328–385 (PDGH…SMSH), 430–457 (VSSDSLGPPRPAPARTPTQPPPEPGDLP), 473–609 (LLPD…RLEE), 632–696 (LGKS…HEGL), 714–1029 (QRDM…SALA), and 1061–1111 (NNLG…TGPR). Position 184 is a phosphothreonine (Thr184). Residues 189–205 (AQRASPAAPADGAAPAQ) are compositionally biased toward low complexity. At Ser193 the chain carries Phosphoserine. In terms of domain architecture, Calponin-homology (CH) spans 203 to 312 (PAQPSIRYRK…LVVMLAELFM (110 aa)). Residues Ser334, Ser341, Ser347, Ser351, Ser368, Ser373, and Ser382 each carry the phosphoserine modification. The segment covering 341–352 (SPPQNNSGSSSP) has biased composition (low complexity). Residues 364–383 (GGPQSPLRGSTGSLKSSPSM) are compositionally biased toward polar residues. Over residues 437-454 (PPRPAPARTPTQPPPEPG) the composition is skewed to pro residues. Phosphoserine is present on residues Ser547, Ser554, and Ser560. The span at 568-579 (AERKKQLVKAEA) shows a compositional bias: basic and acidic residues. Low complexity predominate over residues 594 to 604 (EALSSEMSELS). Residues 594 to 628 (EALSSEMSELSARLEEKRRAIEAQKRRIEAIFAKH) adopt a coiled-coil conformation. The span at 647–657 (GEAEAEAEEAD) shows a compositional bias: acidic residues. Residue Ser685 is modified to Phosphoserine. Residues 696–729 (LGEYNRAVSKLSAALSSLQRDMQRLTDQQQRLLA) are a coiled coil. Residues 731–741 (PEAPGSAPPPA) show a composition bias toward pro residues. Over residues 754 to 779 (AASPSPARRVPATRRSPGPGPSQSPR) the composition is skewed to low complexity. The residue at position 769 (Ser769) is a Phosphoserine. Position 799 is a phosphothreonine (Thr799). Ser814 is subject to Phosphoserine. A compositionally biased stretch (polar residues) spans 814-825 (SPSQVPVQTRSS). Positions 889-940 (YKDEDKPEDEMAQKRASLLERQQRRAEEARRRKQWQEVEKEQRREEAARLAQ) are enriched in basic and acidic residues. The stretch at 896-935 (EDEMAQKRASLLERQQRRAEEARRRKQWQEVEKEQRREEA) forms a coiled coil. Over residues 950 to 964 (VSAVPMATPAPAARA) the composition is skewed to low complexity. Positions 970–998 (VGPRKGDFTRQEYERRAQLKLMDDLDKVL) are enriched in basic and acidic residues. Ser1074 is subject to Phosphoserine. The CKK domain maps to 1109 to 1243 (GPRLYKEPSA…QGKKPTTPKK (135 aa)).

It belongs to the CAMSAP1 family. As to quaternary structure, interacts with PLEKHA7. Interacts with CAMSAP2. Interacts with KATNA1 and KATNB1; leading to regulate the length of CAMSAP3-decorated microtubule stretches. Interacts with AKAP9; regulating Golgi assembly in epithelial cells. Interacts with MACF1. Interacts with AKNA.

It is found in the cytoplasm. The protein localises to the cytoskeleton. Its subcellular location is the cell junction. It localises to the adherens junction. The protein resides in the cilium axoneme. It is found in the cilium basal body. Functionally, key microtubule-organizing protein that specifically binds the minus-end of non-centrosomal microtubules and regulates their dynamics and organization. Specifically recognizes growing microtubule minus-ends and autonomously decorates and stabilizes microtubule lattice formed by microtubule minus-end polymerization. Acts on free microtubule minus-ends that are not capped by microtubule-nucleating proteins or other factors and protects microtubule minus-ends from depolymerization. In addition, it also reduces the velocity of microtubule polymerization. Required for the biogenesis and the maintenance of zonula adherens by anchoring the minus-end of microtubules to zonula adherens and by recruiting the kinesin KIFC3 to those junctional sites. Required for orienting the apical-to-basal polarity of microtubules in epithelial cells: acts by tethering non-centrosomal microtubules to the apical cortex, leading to their longitudinal orientation. Plays a key role in early embryos, which lack centrosomes: accumulates at the microtubule bridges that connect pairs of cells and enables the formation of a non-centrosomal microtubule-organizing center that directs intracellular transport in the early embryo. Couples non-centrosomal microtubules with actin: interaction with MACF1 at the minus ends of non-centrosomal microtubules, tethers the microtubules to actin filaments, regulating focal adhesion size and cell migration. Plays a key role in the generation of non-centrosomal microtubules by accumulating in the pericentrosomal region and cooperating with KATNA1 to release non-centrosomal microtubules from the centrosome. Through the microtubule cytoskeleton, also regulates the organization of cellular organelles including the Golgi and the early endosomes. Through interaction with AKAP9, involved in translocation of Golgi vesicles in epithelial cells, where microtubules are mainly non-centrosomal. Plays an important role in motile cilia function by facilitatating proper orientation of basal bodies and formation of central microtubule pairs in motile cilia. This chain is Calmodulin-regulated spectrin-associated protein 3, found in Homo sapiens (Human).